The chain runs to 56 residues: Small ribosomal subunit protein uS14B (56 aa).

2 residues coordinate Zn(2+): cysteine 21 and cysteine 24. Position 25 is a phosphoserine (serine 25). Residues cysteine 39 and cysteine 42 each contribute to the Zn(2+) site.

This sequence belongs to the universal ribosomal protein uS14 family. Component of the small ribosomal subunit (SSU). Mature yeast ribosomes consist of a small (40S) and a large (60S) subunit. The 40S small subunit contains 1 molecule of ribosomal RNA (18S rRNA) and 33 different proteins (encoded by 57 genes). The large 60S subunit contains 3 rRNA molecules (25S, 5.8S and 5S rRNA) and 46 different proteins (encoded by 81 genes). The cofactor is Zn(2+).

It is found in the cytoplasm. Component of the ribosome, a large ribonucleoprotein complex responsible for the synthesis of proteins in the cell. The small ribosomal subunit (SSU) binds messenger RNAs (mRNAs) and translates the encoded message by selecting cognate aminoacyl-transfer RNA (tRNA) molecules. The large subunit (LSU) contains the ribosomal catalytic site termed the peptidyl transferase center (PTC), which catalyzes the formation of peptide bonds, thereby polymerizing the amino acids delivered by tRNAs into a polypeptide chain. The nascent polypeptides leave the ribosome through a tunnel in the LSU and interact with protein factors that function in enzymatic processing, targeting, and the membrane insertion of nascent chains at the exit of the ribosomal tunnel. This chain is Small ribosomal subunit protein uS14B, found in Saccharomyces cerevisiae (strain ATCC 204508 / S288c) (Baker's yeast).